Here is a 553-residue protein sequence, read N- to C-terminus: Methyl-coenzyme M reductase I subunit alpha (553 aa).

Glutamine 150 serves as a coordination point for coenzyme F430. Coenzyme B contacts are provided by residues arginine 228, 259–260 (KH), and arginine 273. The residue at position 274 (arginine 274) is a 5-methylarginine. Coenzyme M contacts are provided by tyrosine 335 and tyrosine 447.

It belongs to the methyl-coenzyme M reductase alpha subunit family. In terms of assembly, MCR is a hexamer of two alpha, two beta, and two gamma chains, forming a dimer of heterotrimers. Requires coenzyme F430 as cofactor. Post-translationally, is methylated on C5 of Arg-274 by the methyltransferase MJ0841. This post-translational methylation, despite being not essential in vivo, plays a role for the stability and structural integrity of MCR.

Its subcellular location is the cytoplasm. The catalysed reaction is coenzyme B + methyl-coenzyme M = methane + coenzyme M-coenzyme B heterodisulfide. Its pathway is one-carbon metabolism; methyl-coenzyme M reduction; methane from methyl-coenzyme M: step 1/1. Its function is as follows. Component of the methyl-coenzyme M reductase (MCR) I that catalyzes the reductive cleavage of methyl-coenzyme M (CoM-S-CH3 or 2-(methylthio)ethanesulfonate) using coenzyme B (CoB or 7-mercaptoheptanoylthreonine phosphate) as reductant which results in the production of methane and the mixed heterodisulfide of CoB and CoM (CoM-S-S-CoB). This is the final step in methanogenesis. In Methanocaldococcus jannaschii (strain ATCC 43067 / DSM 2661 / JAL-1 / JCM 10045 / NBRC 100440) (Methanococcus jannaschii), this protein is Methyl-coenzyme M reductase I subunit alpha (mcrA).